The sequence spans 217 residues: MLLQPVWKGCRWTQFVRPIRRWNSTGTNRGVPFSFKDISNQEDITNISYPSSSDSVLTKSNGSSEVYKPKEEVVKYILHGKFTKNNTHLTFSSVVEDKNFHKNKGLTYNDTMLYYLNLPQKVKISLSTGCLGFRKAARGEYEAAFQTSGRMFELIKEKNMLNKDIEVVMDDFGKGRAAFISALVGKEGASVVKKVVKISDATKLKFGGVRSPKMRRL.

The N-terminal 59 residues, 1 to 59 (MLLQPVWKGCRWTQFVRPIRRWNSTGTNRGVPFSFKDISNQEDITNISYPSSSDSVLTK), are a transit peptide targeting the mitochondrion.

The protein belongs to the universal ribosomal protein uS11 family. In terms of assembly, component of the mitochondrial small ribosomal subunit (mt-SSU). Mature yeast 74S mitochondrial ribosomes consist of a small (37S) and a large (54S) subunit. The 37S small subunit contains a 15S ribosomal RNA (15S mt-rRNA) and 34 different proteins. The 54S large subunit contains a 21S rRNA (21S mt-rRNA) and 46 different proteins.

It localises to the mitochondrion. Component of the mitochondrial ribosome (mitoribosome), a dedicated translation machinery responsible for the synthesis of mitochondrial genome-encoded proteins, including at least some of the essential transmembrane subunits of the mitochondrial respiratory chain. The mitoribosomes are attached to the mitochondrial inner membrane and translation products are cotranslationally integrated into the membrane. The protein is Small ribosomal subunit protein uS11m (MRPS18) of Saccharomyces cerevisiae (strain ATCC 204508 / S288c) (Baker's yeast).